We begin with the raw amino-acid sequence, 527 residues long: Zinc finger protein 35 (527 aa).

Residues 9-221 form a globular domain region; that stretch reads MALAPWGPVK…NPKTQLGQKP (213 aa). A disordered region spans residues 16-38; the sequence is PVKVKKEEEEEENFPGQASSQQV. Glycyl lysine isopeptide (Lys-Gly) (interchain with G-Cter in SUMO2) cross-links involve residues Lys20, Lys21, Lys99, Lys117, Lys125, Lys144, Lys158, Lys189, and Lys214. 2 C2H2-type zinc fingers span residues 222–244 and 250–272; these read FTCS…QRIH and FECH…QRIH. Residue Lys276 forms a Glycyl lysine isopeptide (Lys-Gly) (interchain with G-Cter in SUMO2) linkage. C2H2-type zinc fingers lie at residues 278-300, 306-328, 334-356, 362-384, 390-412, 418-440, 446-468, 474-496, and 502-524; these read YVCS…QKIH, FKCN…QKVH, YECN…QRIH, FACN…QRSH, YECK…QRIH, YDCS…QRIH, YVCN…QRIH, YTCN…QRTH, and YECE…HRTH.

It belongs to the krueppel C2H2-type zinc-finger protein family.

Its subcellular location is the nucleus. Functionally, may be involved in transcriptional regulation. Involved in cell differentiation and/or proliferation. The polypeptide is Zinc finger protein 35 (ZNF35) (Homo sapiens (Human)).